The chain runs to 271 residues: Fork head domain-containing protein FD5 (271 aa).

A DNA-binding region (fork-head) is located at residues 12–103 (QKPPYSYISL…FDMFENGSLL (92 aa)).

Expressed in early embryogenesis in 14 symmetrical pairs of segmentally arranged neuroblasts and in developing peripheral nervous system. Also, later in embryogenesis, in a cluster of cells in head region.

It is found in the nucleus. In terms of biological role, involved in development during embryogenesis. This is Fork head domain-containing protein FD5 (fd96Cb) from Drosophila melanogaster (Fruit fly).